We begin with the raw amino-acid sequence, 627 residues long: Alpha-terpineol synthase, chloroplastic (627 aa).

A chloroplast-targeting transit peptide spans 1–53 (MAGITGVMNMKLAARPSSGRHSRGCRPAVVPSAGKQMLLVRRHPPGSASWPTR). A disordered region spans residues 13–90 (AARPSSGRHS…EDRASRNTSS (78 aa)). Arginine 339, aspartate 376, aspartate 380, arginine 518, and aspartate 521 together coordinate (2E)-geranyl diphosphate. Mg(2+) is bound by residues aspartate 376 and aspartate 380. The DDXXD motif signature appears at 376-380 (DDTYD). The Mg(2+) site is built by aspartate 521, serine 525, and glutamate 529.

This sequence belongs to the terpene synthase family. Tpsb subfamily. As to quaternary structure, monomer. Requires Mg(2+) as cofactor. Mn(2+) serves as cofactor. As to expression, expressed in seedling leaf sheaths and roots.

The protein localises to the plastid. It localises to the chloroplast. It carries out the reaction (2E)-geranyl diphosphate + H2O = (S)-alpha-terpineol + diphosphate. The enzyme catalyses (2E)-geranyl diphosphate = (4S)-limonene + diphosphate. The catalysed reaction is (2E)-geranyl diphosphate = gamma-terpinene + diphosphate. It catalyses the reaction (2E)-geranyl diphosphate = beta-myrcene + diphosphate. It carries out the reaction (2E)-geranyl diphosphate = terpinolene + diphosphate. The enzyme catalyses (2E)-geranyl diphosphate + H2O = 4-terpineol + diphosphate. The protein operates within secondary metabolite biosynthesis; terpenoid biosynthesis. Component of the volatile terpenes biosynthesis pathways. Mediates the synthesis of a blend of monoterpenes. Converts mainly geranyl diphosphate to alpha-terpineol. Also triggers the biosynthesis of minor monoterpenes including limonene, gamma-terpinene, beta-myrcene, terpinolene and 4-terpineol. The sequence is that of Alpha-terpineol synthase, chloroplastic from Zea mays (Maize).